The chain runs to 449 residues: Required for meiotic nuclear division protein 1 homolog (449 aa).

The transit peptide at 1–12 directs the protein to the mitochondrion; it reads MPATLLRAVARS.

This sequence belongs to the RMD1/sif2 family. As to quaternary structure, homooligomer.

The protein resides in the mitochondrion. In terms of biological role, required for mitochondrial translation, possibly by coordinating the assembly or maintenance of the mitochondrial ribosome. The sequence is that of Required for meiotic nuclear division protein 1 homolog (RMND1) from Homo sapiens (Human).